Reading from the N-terminus, the 86-residue chain is Cell division topological specificity factor (86 aa).

The protein belongs to the MinE family.

Its function is as follows. Prevents the cell division inhibition by proteins MinC and MinD at internal division sites while permitting inhibition at polar sites. This ensures cell division at the proper site by restricting the formation of a division septum at the midpoint of the long axis of the cell. The chain is Cell division topological specificity factor from Stenotrophomonas maltophilia (strain R551-3).